A 245-amino-acid polypeptide reads, in one-letter code: DnaJ homolog subfamily B member 6-B (245 aa).

The J domain occupies 3-69 (EYYDVLGVQR…KKRDIYDKYG (67 aa)).

As to quaternary structure, homooligomer.

The protein resides in the cytoplasm. It localises to the perinuclear region. Its subcellular location is the nucleus. In terms of biological role, has a stimulatory effect on the ATPase activity of HSP70 in a dose-dependent and time-dependent manner and hence acts as a co-chaperone of HSP70. Plays an indispensable role in the organization of KRT8/KRT18 filaments. Acts as an endogenous molecular chaperone for neuronal proteins including huntingtin. Suppresses aggregation and toxicity of polyglutamine-containing, aggregation-prone proteins. Also reduces cellular toxicity and caspase-3 activity. The chain is DnaJ homolog subfamily B member 6-B (dnajb6-b) from Xenopus laevis (African clawed frog).